Reading from the N-terminus, the 178-residue chain is Putative pre-16S rRNA nuclease (178 aa).

Basic and acidic residues-rich tracts occupy residues M1–R18 and P50–P60. Disordered regions lie at residues M1 to G23 and S36 to P60.

Belongs to the YqgF nuclease family.

Its subcellular location is the cytoplasm. Its function is as follows. Could be a nuclease involved in processing of the 5'-end of pre-16S rRNA. The sequence is that of Putative pre-16S rRNA nuclease from Rhodococcus opacus (strain B4).